Consider the following 248-residue polypeptide: Large ribosomal subunit protein uL4 (248 aa).

2 disordered regions span residues 48–95 and 210–248; these read GTHK…GPVP and AFSE…RTGA. Positions 233 to 248 are enriched in basic and acidic residues; it reads DATKARSSRHDDRTGA.

This sequence belongs to the universal ribosomal protein uL4 family. Part of the 50S ribosomal subunit.

In terms of biological role, one of the primary rRNA binding proteins, this protein initially binds near the 5'-end of the 23S rRNA. It is important during the early stages of 50S assembly. It makes multiple contacts with different domains of the 23S rRNA in the assembled 50S subunit and ribosome. Functionally, forms part of the polypeptide exit tunnel. In Tropheryma whipplei (strain TW08/27) (Whipple's bacillus), this protein is Large ribosomal subunit protein uL4.